The primary structure comprises 308 residues: Porphobilinogen deaminase (308 aa).

Residue C241 is modified to S-(dipyrrolylmethanemethyl)cysteine.

The protein belongs to the HMBS family. As to quaternary structure, monomer. Dipyrromethane serves as cofactor.

The enzyme catalyses 4 porphobilinogen + H2O = hydroxymethylbilane + 4 NH4(+). It functions in the pathway porphyrin-containing compound metabolism; protoporphyrin-IX biosynthesis; coproporphyrinogen-III from 5-aminolevulinate: step 2/4. Its function is as follows. Tetrapolymerization of the monopyrrole PBG into the hydroxymethylbilane pre-uroporphyrinogen in several discrete steps. This is Porphobilinogen deaminase from Staphylococcus aureus (strain bovine RF122 / ET3-1).